The sequence spans 233 residues: Ribulose-phosphate 3-epimerase (233 aa).

S16 contributes to the substrate binding site. The a divalent metal cation site is built by H41, D43, and H74. D43 functions as the Proton acceptor in the catalytic mechanism. Substrate-binding positions include H74, 150 to 153 (GFCG), 185 to 187 (DGG), and 207 to 208 (AS). Residue D185 coordinates a divalent metal cation. The Proton donor role is filled by D185.

It belongs to the ribulose-phosphate 3-epimerase family. The cofactor is a divalent metal cation.

The enzyme catalyses D-ribulose 5-phosphate = D-xylulose 5-phosphate. It participates in carbohydrate degradation. Its function is as follows. Catalyzes the reversible epimerization of D-ribulose 5-phosphate to D-xylulose 5-phosphate. The polypeptide is Ribulose-phosphate 3-epimerase (Chlamydia trachomatis serovar D (strain ATCC VR-885 / DSM 19411 / UW-3/Cx)).